The primary structure comprises 300 residues: N-acetylmuramic acid 6-phosphate etherase (300 aa).

Residues 57-220 (IAVAFQSGGR…TTGAMIRTGK (164 aa)) form the SIS domain. The Proton donor role is filled by Glu85. Glu116 is an active-site residue.

This sequence belongs to the GCKR-like family. MurNAc-6-P etherase subfamily. Homodimer.

It catalyses the reaction N-acetyl-D-muramate 6-phosphate + H2O = N-acetyl-D-glucosamine 6-phosphate + (R)-lactate. Its pathway is amino-sugar metabolism; 1,6-anhydro-N-acetylmuramate degradation. It functions in the pathway amino-sugar metabolism; N-acetylmuramate degradation. The protein operates within cell wall biogenesis; peptidoglycan recycling. Functionally, specifically catalyzes the cleavage of the D-lactyl ether substituent of MurNAc 6-phosphate, producing GlcNAc 6-phosphate and D-lactate. Together with AnmK, is also required for the utilization of anhydro-N-acetylmuramic acid (anhMurNAc) either imported from the medium or derived from its own cell wall murein, and thus plays a role in cell wall recycling. This chain is N-acetylmuramic acid 6-phosphate etherase, found in Aliivibrio fischeri (strain ATCC 700601 / ES114) (Vibrio fischeri).